We begin with the raw amino-acid sequence, 361 residues long: Spermatogenesis-associated protein 17 (361 aa).

3 IQ domains span residues 32–61, 55–84, and 91–120; these read ENDA…IVTI, LNRI…VAYY, and YNAM…LKEY.

Its subcellular location is the cytoplasm. This Homo sapiens (Human) protein is Spermatogenesis-associated protein 17 (SPATA17).